Consider the following 1011-residue polypeptide: Probable beta-galactosidase E (1011 aa).

Positions 1 to 19 (MKSLLKRLIALAAAYSVAA) are cleaved as a signal peptide. Y92, N136, A137, E138, and N195 together coordinate substrate. E196 acts as the Proton donor in catalysis. The N-linked (GlcNAc...) asparagine glycan is linked to N202. Substrate is bound at residue Y261. A disulfide bond links C267 and C316. E299 acts as the Nucleophile in catalysis. Residue Y365 coordinates substrate. Residues N406, N423, N446, N455, N588, N622, N704, N745, N759, N772, N778, and N913 are each glycosylated (N-linked (GlcNAc...) asparagine).

This sequence belongs to the glycosyl hydrolase 35 family.

It is found in the secreted. The enzyme catalyses Hydrolysis of terminal non-reducing beta-D-galactose residues in beta-D-galactosides.. Cleaves beta-linked terminal galactosyl residues from gangliosides, glycoproteins, and glycosaminoglycans. In Aspergillus fumigatus (strain CBS 144.89 / FGSC A1163 / CEA10) (Neosartorya fumigata), this protein is Probable beta-galactosidase E (lacE).